A 127-amino-acid chain; its full sequence is MAKLSQDDLLAQFEEMTLIELSEFVKAFEEKFDVTAAAAVAVAGPAAGGAPAEAEAEQDEFDVILTGAGEKKIQVIKVVRELTSLGLKEAKDLVDGTPKPVLEKVAKEAAEKAAESLKAAGASVEVK.

The protein belongs to the bacterial ribosomal protein bL12 family. Homodimer. Part of the ribosomal stalk of the 50S ribosomal subunit. Forms a multimeric L10(L12)X complex, where L10 forms an elongated spine to which 2 to 4 L12 dimers bind in a sequential fashion. Binds GTP-bound translation factors.

Its function is as follows. Forms part of the ribosomal stalk which helps the ribosome interact with GTP-bound translation factors. Is thus essential for accurate translation. The chain is Large ribosomal subunit protein bL12 from Streptomyces griseus subsp. griseus (strain JCM 4626 / CBS 651.72 / NBRC 13350 / KCC S-0626 / ISP 5235).